A 137-amino-acid polypeptide reads, in one-letter code: Large ribosomal subunit protein uL16 (137 aa).

The tract at residues 1-20 (MLQPSNRKYRKDFKGRNRGV) is disordered. Residues 7 to 17 (RKYRKDFKGRN) are compositionally biased toward basic residues.

This sequence belongs to the universal ribosomal protein uL16 family. In terms of assembly, part of the 50S ribosomal subunit.

Functionally, binds 23S rRNA and is also seen to make contacts with the A and possibly P site tRNAs. This Coxiella burnetii (strain CbuG_Q212) (Coxiella burnetii (strain Q212)) protein is Large ribosomal subunit protein uL16.